We begin with the raw amino-acid sequence, 146 residues long: Hemoglobin subunit beta (146 aa).

Residues 2 to 146 enclose the Globin domain; the sequence is HWTAEEKQLI…VAHALARKYH (145 aa). 2 residues coordinate heme b: His63 and His92.

The protein belongs to the globin family. Heterotetramer of two alpha chains and two beta chains. In terms of tissue distribution, red blood cells.

Functionally, involved in oxygen transport from the lung to the various peripheral tissues. The sequence is that of Hemoglobin subunit beta (HBB) from Ara ararauna (Blue-and-yellow macaw).